Here is a 201-residue protein sequence, read N- to C-terminus: Dephospho-CoA kinase (201 aa).

One can recognise a DPCK domain in the interval 3–201 (VIGLTGGIAS…WKERIEKNPR (199 aa)). ATP is bound at residue 11-16 (ASGKST).

This sequence belongs to the CoaE family.

The protein localises to the cytoplasm. It carries out the reaction 3'-dephospho-CoA + ATP = ADP + CoA + H(+). Its pathway is cofactor biosynthesis; coenzyme A biosynthesis; CoA from (R)-pantothenate: step 5/5. Its function is as follows. Catalyzes the phosphorylation of the 3'-hydroxyl group of dephosphocoenzyme A to form coenzyme A. This chain is Dephospho-CoA kinase, found in Geobacter metallireducens (strain ATCC 53774 / DSM 7210 / GS-15).